A 507-amino-acid polypeptide reads, in one-letter code: ATP synthase subunit beta (507 aa).

A disordered region spans residues 1-22 (MSGLASKAKSRVKSSKGKNSTN). ATP is bound at residue 183-190 (GGAGVGKT).

It belongs to the ATPase alpha/beta chains family. As to quaternary structure, F-type ATPases have 2 components, CF(1) - the catalytic core - and CF(0) - the membrane proton channel. CF(1) has five subunits: alpha(3), beta(3), gamma(1), delta(1), epsilon(1). CF(0) has three main subunits: a(1), b(2) and c(9-12). The alpha and beta chains form an alternating ring which encloses part of the gamma chain. CF(1) is attached to CF(0) by a central stalk formed by the gamma and epsilon chains, while a peripheral stalk is formed by the delta and b chains.

Its subcellular location is the cell inner membrane. It catalyses the reaction ATP + H2O + 4 H(+)(in) = ADP + phosphate + 5 H(+)(out). Functionally, produces ATP from ADP in the presence of a proton gradient across the membrane. The catalytic sites are hosted primarily by the beta subunits. The protein is ATP synthase subunit beta of Ehrlichia chaffeensis (strain ATCC CRL-10679 / Arkansas).